Here is a 410-residue protein sequence, read N- to C-terminus: Peptidase T (410 aa).

Position 79 (His-79) interacts with Zn(2+). The active site involves Asp-81. Position 142 (Asp-142) interacts with Zn(2+). Catalysis depends on Glu-176, which acts as the Proton acceptor. Residues Glu-177, Asp-199, and His-381 each contribute to the Zn(2+) site.

It belongs to the peptidase M20B family. Zn(2+) serves as cofactor.

Its subcellular location is the cytoplasm. The catalysed reaction is Release of the N-terminal residue from a tripeptide.. Functionally, cleaves the N-terminal amino acid of tripeptides. The polypeptide is Peptidase T (Bacillus cereus (strain G9842)).